The sequence spans 157 residues: SsrA-binding protein (157 aa).

The segment at 131–157 is disordered; it reads KQLHDKRDTEKKRDWSREKGRIMRARG. Residues 132–151 show a composition bias toward basic and acidic residues; the sequence is QLHDKRDTEKKRDWSREKGR.

Belongs to the SmpB family.

The protein localises to the cytoplasm. Functionally, required for rescue of stalled ribosomes mediated by trans-translation. Binds to transfer-messenger RNA (tmRNA), required for stable association of tmRNA with ribosomes. tmRNA and SmpB together mimic tRNA shape, replacing the anticodon stem-loop with SmpB. tmRNA is encoded by the ssrA gene; the 2 termini fold to resemble tRNA(Ala) and it encodes a 'tag peptide', a short internal open reading frame. During trans-translation Ala-aminoacylated tmRNA acts like a tRNA, entering the A-site of stalled ribosomes, displacing the stalled mRNA. The ribosome then switches to translate the ORF on the tmRNA; the nascent peptide is terminated with the 'tag peptide' encoded by the tmRNA and targeted for degradation. The ribosome is freed to recommence translation, which seems to be the essential function of trans-translation. The sequence is that of SsrA-binding protein from Rhodopseudomonas palustris (strain BisB18).